A 215-amino-acid chain; its full sequence is 3-isopropylmalate dehydratase small subunit (215 aa).

Belongs to the LeuD family. LeuD type 1 subfamily. In terms of assembly, heterodimer of LeuC and LeuD.

It catalyses the reaction (2R,3S)-3-isopropylmalate = (2S)-2-isopropylmalate. It functions in the pathway amino-acid biosynthesis; L-leucine biosynthesis; L-leucine from 3-methyl-2-oxobutanoate: step 2/4. Its function is as follows. Catalyzes the isomerization between 2-isopropylmalate and 3-isopropylmalate, via the formation of 2-isopropylmaleate. This Xanthomonas campestris pv. campestris (strain 8004) protein is 3-isopropylmalate dehydratase small subunit.